Reading from the N-terminus, the 137-residue chain is Large ribosomal subunit protein uL16 (137 aa).

The segment covering 1-17 has biased composition (basic residues); the sequence is MLSPKRTKFRKQQRGRM. Residues 1–24 form a disordered region; that stretch reads MLSPKRTKFRKQQRGRMRGNANSG.

The protein belongs to the universal ribosomal protein uL16 family. In terms of assembly, part of the 50S ribosomal subunit.

In terms of biological role, binds 23S rRNA and is also seen to make contacts with the A and possibly P site tRNAs. This is Large ribosomal subunit protein uL16 from Trichodesmium erythraeum (strain IMS101).